Reading from the N-terminus, the 246-residue chain is DNA repair protein RecO (246 aa).

Belongs to the RecO family.

Involved in DNA repair and RecF pathway recombination. This Maridesulfovibrio salexigens (strain ATCC 14822 / DSM 2638 / NCIMB 8403 / VKM B-1763) (Desulfovibrio salexigens) protein is DNA repair protein RecO.